Reading from the N-terminus, the 79-residue chain is MKLTCVLIITVLFLTASQLITADYSRDQRQYRAVRLGDEMRNFKGARDCGGQGKGCYTQPCCPGLRCRGGGTGGGVCQP.

A signal peptide spans Met1 to Ala22. A propeptide spanning residues Asp23–Arg47 is cleaved from the precursor. Cystine bridges form between Cys49–Cys62, Cys56–Cys67, and Cys61–Cys77.

This sequence belongs to the conotoxin O1 superfamily. In terms of tissue distribution, expressed by the venom duct.

It is found in the secreted. The chain is Conotoxin 12 from Conus vexillum (Flag cone).